Reading from the N-terminus, the 227-residue chain is Cytochrome c oxidase subunit 2 (227 aa).

Residues 1 to 14 (MAHRAQVGLQDATS) are Mitochondrial intermembrane-facing. A helical transmembrane segment spans residues 15–45 (PIMEELVIFHDHALMIIFLICFLVLYALFLT). Residues 46 to 59 (LTTKLTNTNISDAQ) lie on the Mitochondrial matrix side of the membrane. Residues 60 to 87 (EMETIWTTLPAIILILIALPSLRILYLT) traverse the membrane as a helical segment. The Mitochondrial intermembrane segment spans residues 88–227 (DEINDPSFTI…IFEMGPVFAL (140 aa)). Residues H161, C196, E198, C200, H204, and M207 each coordinate Cu cation. E198 is a Mg(2+) binding site.

It belongs to the cytochrome c oxidase subunit 2 family. Component of the cytochrome c oxidase (complex IV, CIV), a multisubunit enzyme composed of 14 subunits. The complex is composed of a catalytic core of 3 subunits MT-CO1, MT-CO2 and MT-CO3, encoded in the mitochondrial DNA, and 11 supernumerary subunits COX4I, COX5A, COX5B, COX6A, COX6B, COX6C, COX7A, COX7B, COX7C, COX8 and NDUFA4, which are encoded in the nuclear genome. The complex exists as a monomer or a dimer and forms supercomplexes (SCs) in the inner mitochondrial membrane with NADH-ubiquinone oxidoreductase (complex I, CI) and ubiquinol-cytochrome c oxidoreductase (cytochrome b-c1 complex, complex III, CIII), resulting in different assemblies (supercomplex SCI(1)III(2)IV(1) and megacomplex MCI(2)III(2)IV(2)). Found in a complex with TMEM177, COA6, COX18, COX20, SCO1 and SCO2. Interacts with TMEM177 in a COX20-dependent manner. Interacts with COX20. Interacts with COX16. The cofactor is Cu cation.

It localises to the mitochondrion inner membrane. The enzyme catalyses 4 Fe(II)-[cytochrome c] + O2 + 8 H(+)(in) = 4 Fe(III)-[cytochrome c] + 2 H2O + 4 H(+)(out). Functionally, component of the cytochrome c oxidase, the last enzyme in the mitochondrial electron transport chain which drives oxidative phosphorylation. The respiratory chain contains 3 multisubunit complexes succinate dehydrogenase (complex II, CII), ubiquinol-cytochrome c oxidoreductase (cytochrome b-c1 complex, complex III, CIII) and cytochrome c oxidase (complex IV, CIV), that cooperate to transfer electrons derived from NADH and succinate to molecular oxygen, creating an electrochemical gradient over the inner membrane that drives transmembrane transport and the ATP synthase. Cytochrome c oxidase is the component of the respiratory chain that catalyzes the reduction of oxygen to water. Electrons originating from reduced cytochrome c in the intermembrane space (IMS) are transferred via the dinuclear copper A center (CU(A)) of subunit 2 and heme A of subunit 1 to the active site in subunit 1, a binuclear center (BNC) formed by heme A3 and copper B (CU(B)). The BNC reduces molecular oxygen to 2 water molecules using 4 electrons from cytochrome c in the IMS and 4 protons from the mitochondrial matrix. The protein is Cytochrome c oxidase subunit 2 (MT-CO2) of Pongo pygmaeus (Bornean orangutan).